Consider the following 594-residue polypeptide: Aspartate--tRNA(Asp/Asn) ligase (594 aa).

L-aspartate is bound at residue Glu175. The tract at residues 199 to 202 (QQFK) is aspartate. 2 residues coordinate L-aspartate: Arg221 and His455. Position 221-223 (221-223 (RDE)) interacts with ATP. An ATP-binding site is contributed by Glu488. Arg495 is a binding site for L-aspartate. Residue 540–543 (GIDR) participates in ATP binding.

It belongs to the class-II aminoacyl-tRNA synthetase family. Type 1 subfamily. In terms of assembly, homodimer.

Its subcellular location is the cytoplasm. It catalyses the reaction tRNA(Asx) + L-aspartate + ATP = L-aspartyl-tRNA(Asx) + AMP + diphosphate. Aspartyl-tRNA synthetase with relaxed tRNA specificity since it is able to aspartylate not only its cognate tRNA(Asp) but also tRNA(Asn). Reaction proceeds in two steps: L-aspartate is first activated by ATP to form Asp-AMP and then transferred to the acceptor end of tRNA(Asp/Asn). The chain is Aspartate--tRNA(Asp/Asn) ligase from Ruegeria sp. (strain TM1040) (Silicibacter sp.).